The primary structure comprises 1318 residues: Major tegument protein (1318 aa).

This sequence belongs to the herpesviridae MTP family. Interacts with host DAXX; this interaction disrupts the chromatin remodeling complex ATRX:DAXX and thus allows viral transcription. Interacts with host SMC6; this interaction targets SMC5-SMC6 complex for proteasomal degradation.

It is found in the virion tegument. Its subcellular location is the host nucleus. Functionally, tegument protein that plays a role in the inhibition of host intrinsic defenses to promote viral early gene activation. Interacts with host DAXX and thereby disrupts the complex between DAXX and ATRX. Suppresses the DAXX-ATRX dependent deposition of histone H3.3 on viral chromatin allowing viral transcription. Targets also host SMC5/6 for proteasomal degradation in a CUL7 and calpain-dependent manner to support nuclear membrane-less replication compartment formation and lytic virus replication. This is Major tegument protein from Epstein-Barr virus (strain GD1) (HHV-4).